A 515-amino-acid chain; its full sequence is Bifunctional purine biosynthesis protein PurH (515 aa).

The MGS-like domain occupies 1 to 145 (MTKRVLISVS…KNHASVTVVV (145 aa)).

It belongs to the PurH family.

It catalyses the reaction (6R)-10-formyltetrahydrofolate + 5-amino-1-(5-phospho-beta-D-ribosyl)imidazole-4-carboxamide = 5-formamido-1-(5-phospho-D-ribosyl)imidazole-4-carboxamide + (6S)-5,6,7,8-tetrahydrofolate. It carries out the reaction IMP + H2O = 5-formamido-1-(5-phospho-D-ribosyl)imidazole-4-carboxamide. Its pathway is purine metabolism; IMP biosynthesis via de novo pathway; 5-formamido-1-(5-phospho-D-ribosyl)imidazole-4-carboxamide from 5-amino-1-(5-phospho-D-ribosyl)imidazole-4-carboxamide (10-formyl THF route): step 1/1. It participates in purine metabolism; IMP biosynthesis via de novo pathway; IMP from 5-formamido-1-(5-phospho-D-ribosyl)imidazole-4-carboxamide: step 1/1. The polypeptide is Bifunctional purine biosynthesis protein PurH (Streptococcus pneumoniae serotype 2 (strain D39 / NCTC 7466)).